A 479-amino-acid polypeptide reads, in one-letter code: MGKNLSLRQDDAQHALSANTSSAYNSVYDFLRYHDRGDGLTVNGKTSYSIDQAAAQITRENVSWNGTNVFGKSANLTFKFLQSVSSIPSGDTGFVKFNAEQIEQAKLSLQSWSDVANLTFTEVTGNKSANITFGNYTRDASGNLDYGTQAYAYYPGNYQGAGSSWYNYNQSNIRNPGSEEYGRQTFTHEIGHALGLAHPGEYNAGEGDPSYNDAVYAEDSYQFSIMSYWGENETGADYNGHYGGAPMIDDIAAIQRLYGANMTTRTGDSVYGFNSNTDRDFYTATDSSKALIFSVWDAGGTDTFDFSGYSNNQRINLNEGSFSDVGGLKGNVSIAHGVTIENAIGGSGNDILVGNSADNILQGGAGNDVLYGGAGADTLYGGAGRDTFVYGSGQDSTVAAYDWIADFQKGIDKIDLSAFRNEGQLSFVQDQFTGKGQEVMLQWDAANSITNLWLHEAGHSSVDFLVRIVGQAAQSDIIV.

Residues 1–17 (MGKNLSLRQDDAQHALS) constitute a propeptide that is removed on maturation. Histidine 188 provides a ligand contact to Zn(2+). Residue glutamate 189 is part of the active site. Zn(2+) is bound by residues histidine 192 and tyrosine 228. Residues arginine 265, glycine 267, aspartate 297, glycine 299, glycine 300, aspartate 302, threonine 339, glutamate 341, glycine 346, glycine 348, aspartate 350, asparagine 355, alanine 357, asparagine 359, glycine 363, glycine 364, alanine 365, glycine 366, aspartate 368, glycine 372, glycine 373, glycine 375, aspartate 377, glycine 381, glycine 382, alanine 383, glycine 384, aspartate 386, aspartate 395, aspartate 402, and aspartate 412 each contribute to the Ca(2+) site. 3 Hemolysin-type calcium-binding repeats span residues 344–361 (IGGS…DNIL), 362–379 (QGGA…ADTL), and 380–397 (YGGA…QDST).

It belongs to the peptidase M10B family. It depends on Ca(2+) as a cofactor. The cofactor is Zn(2+).

The protein localises to the secreted. The enzyme catalyses Preferential cleavage of bonds with hydrophobic residues in P1'.. The chain is Serralysin C (prtC) from Dickeya chrysanthemi (Pectobacterium chrysanthemi).